The sequence spans 283 residues: Acetylglutamate kinase (283 aa).

Substrate-binding positions include 64–65 (GG), arginine 86, and asparagine 181.

It belongs to the acetylglutamate kinase family. ArgB subfamily.

The protein resides in the cytoplasm. The enzyme catalyses N-acetyl-L-glutamate + ATP = N-acetyl-L-glutamyl 5-phosphate + ADP. It functions in the pathway amino-acid biosynthesis; L-arginine biosynthesis; N(2)-acetyl-L-ornithine from L-glutamate: step 2/4. In terms of biological role, catalyzes the ATP-dependent phosphorylation of N-acetyl-L-glutamate. The polypeptide is Acetylglutamate kinase (Sulfurimonas denitrificans (strain ATCC 33889 / DSM 1251) (Thiomicrospira denitrificans (strain ATCC 33889 / DSM 1251))).